A 201-amino-acid polypeptide reads, in one-letter code: ATP-dependent Clp protease proteolytic subunit (201 aa).

Serine 97 serves as the catalytic Nucleophile. The active site involves histidine 122.

This sequence belongs to the peptidase S14 family. As to quaternary structure, fourteen ClpP subunits assemble into 2 heptameric rings which stack back to back to give a disk-like structure with a central cavity, resembling the structure of eukaryotic proteasomes.

It localises to the cytoplasm. The enzyme catalyses Hydrolysis of proteins to small peptides in the presence of ATP and magnesium. alpha-casein is the usual test substrate. In the absence of ATP, only oligopeptides shorter than five residues are hydrolyzed (such as succinyl-Leu-Tyr-|-NHMec, and Leu-Tyr-Leu-|-Tyr-Trp, in which cleavage of the -Tyr-|-Leu- and -Tyr-|-Trp bonds also occurs).. Its function is as follows. Cleaves peptides in various proteins in a process that requires ATP hydrolysis. Has a chymotrypsin-like activity. Plays a major role in the degradation of misfolded proteins. The chain is ATP-dependent Clp protease proteolytic subunit from Nitratidesulfovibrio vulgaris (strain ATCC 29579 / DSM 644 / CCUG 34227 / NCIMB 8303 / VKM B-1760 / Hildenborough) (Desulfovibrio vulgaris).